The chain runs to 207 residues: Large ribosomal subunit protein uL4 (207 aa).

A disordered region spans residues 54-76 (RSAVRGGGRKPWRQKGTGRARQG). Positions 60–71 (GGRKPWRQKGTG) are enriched in basic residues.

This sequence belongs to the universal ribosomal protein uL4 family. As to quaternary structure, part of the 50S ribosomal subunit.

One of the primary rRNA binding proteins, this protein initially binds near the 5'-end of the 23S rRNA. It is important during the early stages of 50S assembly. It makes multiple contacts with different domains of the 23S rRNA in the assembled 50S subunit and ribosome. Functionally, forms part of the polypeptide exit tunnel. The protein is Large ribosomal subunit protein uL4 of Staphylococcus haemolyticus (strain JCSC1435).